Here is a 168-residue protein sequence, read N- to C-terminus: Phosphopantetheine adenylyltransferase (168 aa).

Residue threonine 9 participates in substrate binding. Residues 9 to 10 (TF) and histidine 17 each bind ATP. Residues lysine 41, leucine 73, and arginine 87 each contribute to the substrate site. Residues 88–90 (GLR), glutamate 98, and 123–129 (YQFISGT) contribute to the ATP site.

The protein belongs to the bacterial CoaD family. In terms of assembly, homohexamer. Requires Mg(2+) as cofactor.

Its subcellular location is the cytoplasm. The catalysed reaction is (R)-4'-phosphopantetheine + ATP + H(+) = 3'-dephospho-CoA + diphosphate. The protein operates within cofactor biosynthesis; coenzyme A biosynthesis; CoA from (R)-pantothenate: step 4/5. Its function is as follows. Reversibly transfers an adenylyl group from ATP to 4'-phosphopantetheine, yielding dephospho-CoA (dPCoA) and pyrophosphate. The protein is Phosphopantetheine adenylyltransferase of Paraburkholderia phymatum (strain DSM 17167 / CIP 108236 / LMG 21445 / STM815) (Burkholderia phymatum).